A 709-amino-acid polypeptide reads, in one-letter code: MRFSKLSLAITTTLVTANALAQSVELDSINVIATRDPSRFTYTPQKQSKDSLLSKQATSVAAALEDIPNVDVRGGSRSIAQKPNIRGLSDNRVVQVIDGVRQNFDLAHRGSYFLPMSLIQEIEVIKGPSSSLWGSGALGGVVAMRTPNALDLLKNNDKFGVKIRQGYQTANNLSEKDVSVFAANDKFDVLISGFYNNADNLRIGKGNKLNNTAYKQFGGLAKFGWQINDANRVELSHRETRFKQTAPGNNEAKNELTNEQIIEKINEYHNPLNNFPPKAKPSLEEFYSGVRARLGGVSYLSDQQIPDQSTVFNYYLTPDNPYLNTHIALYNNKTIEKEQRKVSGVKDQTKLTTRGINLRNSSELSHISFVYGVDYMRDKISTERGTNDKDAKFRAEPYNANSNTTGVYLIAHIPLFGEKLLLSPSVRYDHYDTSSKTVKYKDNHLSPATKLTWKVTNWLDFTAKYNEAFRAPSMQERFVSGAHFGTSTRVGDIINSFVANPNLRPETAKNKEITANLHFDSLFKQGDKFKIEATYFRNDVKDLINLKRLDDPNANGALSRTNSQYQNIANARLSGIELQAQYQTERLTLFTNYGSTKGRDKDSGEALSNIAASKIGVGADYALVKDKFTVGATITHYAAQHRVPKDHAVTYPSYILTDLRATYAPLKGEWKNLRLDFALENLFDRKYQPAFSLMEGTGRNAKISAVYSF.

The first 21 residues, 1 to 21 (MRFSKLSLAITTTLVTANALA), serve as a signal peptide directing secretion. One can recognise a TBDR plug domain in the interval 36–147 (DPSRFTYTPQ…LGGVVAMRTP (112 aa)). In terms of domain architecture, TBDR beta-barrel spans 158-709 (KFGVKIRQGY…NAKISAVYSF (552 aa)). Positions 692-709 (SLMEGTGRNAKISAVYSF) match the TonB C-terminal box motif.

This sequence belongs to the TonB-dependent receptor family.

It localises to the cell outer membrane. In terms of biological role, required for utilization of free heme at low concentrations. This chain is Heme/hemopexin utilization protein C (hxuC), found in Haemophilus influenzae (strain 86-028NP).